The primary structure comprises 96 residues: Co-chaperonin GroES (96 aa).

The protein belongs to the GroES chaperonin family. In terms of assembly, heptamer of 7 subunits arranged in a ring. Interacts with the chaperonin GroEL.

It localises to the cytoplasm. Its function is as follows. Together with the chaperonin GroEL, plays an essential role in assisting protein folding. The GroEL-GroES system forms a nano-cage that allows encapsulation of the non-native substrate proteins and provides a physical environment optimized to promote and accelerate protein folding. GroES binds to the apical surface of the GroEL ring, thereby capping the opening of the GroEL channel. The protein is Co-chaperonin GroES of Shewanella denitrificans (strain OS217 / ATCC BAA-1090 / DSM 15013).